The sequence spans 199 residues: Adenylate kinase (199 aa).

8–13 (GAGKGT) contributes to the ATP binding site. An NMP region spans residues 28-57 (STGDIFRANIKNKTELGQQVKAIVDAGDYV). Residues T29, R34, 55–57 (DYV), 83–86 (GYPR), and Q90 contribute to the AMP site. Positions 124–134 (KRAREQGRADD) are LID. An ATP-binding site is contributed by R125. AMP-binding residues include R131 and R142. An ATP-binding site is contributed by G170.

Belongs to the adenylate kinase family. As to quaternary structure, monomer.

The protein resides in the cytoplasm. It carries out the reaction AMP + ATP = 2 ADP. It participates in purine metabolism; AMP biosynthesis via salvage pathway; AMP from ADP: step 1/1. In terms of biological role, catalyzes the reversible transfer of the terminal phosphate group between ATP and AMP. Plays an important role in cellular energy homeostasis and in adenine nucleotide metabolism. The protein is Adenylate kinase of Leifsonia xyli subsp. xyli (strain CTCB07).